The following is a 282-amino-acid chain: MDSSSYWSYDNIVPSFRLDGKLVIITGGSGGLSAVVSRALLAKGADIALIDMNLERTQQAARDVLQWGEEQMKGKHESPIGQVSAWSCNIGDAEAVELTFKAINEHHGKVASVLINTAGYAENFPAEEYPAKNAENIMKVNGLGSFYVSQAFARPLIQNNMTGSIILIGSMSGTIVNDPQPQCMYNMSKAGVIHLARSLACEWAKYNIRVNTLSPGYILTPLTRNVISGHTEMKTEWESKIPMKRMAEPKEFVGSILYLASDSASSYTTGHNLVVDGGYECW.

The NADP(+) site is built by Leu32 and Asn53. The Proton donor role is filled by Ser170. Positions 185, 189, 218, and 220 each coordinate NADP(+). Tyr185 (proton acceptor) is an active-site residue. Lys189 (lowers pKa of active site Tyr) is an active-site residue.

It belongs to the short-chain dehydrogenases/reductases (SDR) family.

The enzyme catalyses D-arabinitol + NAD(+) = D-ribulose + NADH + H(+). The protein operates within carbohydrate metabolism; D-arabinitol metabolism. In terms of biological role, catalyzes the NAD(+)-dependent oxidation of D-arabinitol at carbon 4 to produce D-ribulose. The protein is D-arabinitol 2-dehydrogenase [ribulose-forming] (ARD) of Candida tropicalis (Yeast).